We begin with the raw amino-acid sequence, 314 residues long: Hydroxyethylthiazole kinase (314 aa).

A substrate-binding site is contributed by M70. Residues R145 and S217 each contribute to the ATP site. G244 provides a ligand contact to substrate.

The protein belongs to the Thz kinase family. It depends on Mg(2+) as a cofactor.

The catalysed reaction is 5-(2-hydroxyethyl)-4-methylthiazole + ATP = 4-methyl-5-(2-phosphooxyethyl)-thiazole + ADP + H(+). It functions in the pathway cofactor biosynthesis; thiamine diphosphate biosynthesis; 4-methyl-5-(2-phosphoethyl)-thiazole from 5-(2-hydroxyethyl)-4-methylthiazole: step 1/1. In terms of biological role, catalyzes the phosphorylation of the hydroxyl group of 4-methyl-5-beta-hydroxyethylthiazole (THZ). This Bifidobacterium longum (strain DJO10A) protein is Hydroxyethylthiazole kinase.